We begin with the raw amino-acid sequence, 112 residues long: Photosystem II reaction center Psb28 protein (112 aa).

Belongs to the Psb28 family. Part of the photosystem II complex.

Its subcellular location is the cellular thylakoid membrane. This is Photosystem II reaction center Psb28 protein from Synechocystis sp. (strain ATCC 27184 / PCC 6803 / Kazusa).